The following is a 135-amino-acid chain: Cystatin-1 (135 aa).

An N-terminal signal peptide occupies residues M1–S24. The Secondary area of contact motif lies at Q86–G90.

This sequence belongs to the cystatin family. Phytocystatin subfamily.

In Zea mays (Maize), this protein is Cystatin-1 (RAMDAZC7).